We begin with the raw amino-acid sequence, 485 residues long: Adenylate kinase 8 (485 aa).

Adenylate kinase stretches follow at residues 58–258 (PRVF…TFVL) and 269–472 (PRIL…YTVS). An ATP-binding site is contributed by 67–72 (ASGKHT). Residues 87–113 (TPESVLSSDVSLLAKEAQSYRDKGQEV) are NMP 1. AMP contacts are provided by residues 140-143 (GFPK) and glutamine 147. An LID 1 region spans residues 177 to 206 (GKRIDTANGEVYHTTFDWPSDPTVQRNLVE). AMP is bound at residue arginine 218. 278–283 (GSGRSL) provides a ligand contact to ATP. The tract at residues 298-327 (CCGQVLKEAVADQTKLGEVIQPYIENDQQV) is NMP 2. AMP is bound by residues 325–327 (QQV), 354–357 (GFPR), and glutamine 361. The LID 2 stretch occupies residues 391 to 424 (LCMTDPVSGERYHDIYKPAPSSEVHERLQQNPRH). Arginine 432 contributes to the AMP binding site.

This sequence belongs to the adenylate kinase family.

It localises to the cytoplasm. The protein localises to the cytosol. The enzyme catalyses AMP + ATP = 2 ADP. It catalyses the reaction a 2'-deoxyribonucleoside 5'-diphosphate + ATP = a 2'-deoxyribonucleoside 5'-triphosphate + ADP. It carries out the reaction a ribonucleoside 5'-diphosphate + ATP = a ribonucleoside 5'-triphosphate + ADP. Nucleoside monophosphate (NMP) kinase that catalyzes the reversible transfer of the terminal phosphate group between nucleoside triphosphates and monophosphates. Has highest activity toward AMP, and weaker activity toward dAMP, CMP and dCMP. Also displays broad nucleoside diphosphate kinase activity. This is Adenylate kinase 8 (ak8) from Xenopus tropicalis (Western clawed frog).